Consider the following 337-residue polypeptide: Cytoskeleton protein RodZ (337 aa).

At Met-1 to Gly-111 the chain is on the cytoplasmic side. The HTH cro/C1-type domain maps to Leu-19–Leu-71. Positions Gln-30 to Glu-49 form a DNA-binding region, H-T-H motif. The helical; Signal-anchor for type II membrane protein transmembrane segment at Trp-112–Trp-132 threads the bilayer. At Trp-133–Gln-337 the chain is on the periplasmic side. Polar residues predominate over residues Thr-145–Asn-167. The disordered stretch occupies residues Thr-145 to Pro-237. The segment covering Thr-168–Gln-207 has biased composition (low complexity). Residues Asn-208–Val-218 are compositionally biased toward polar residues. The segment covering Asp-219–Pro-237 has biased composition (low complexity).

This sequence belongs to the RodZ family.

It is found in the cell inner membrane. In terms of biological role, cytoskeletal protein that is involved in cell-shape control through regulation of the length of the long axis. The protein is Cytoskeleton protein RodZ of Escherichia coli (strain 55989 / EAEC).